We begin with the raw amino-acid sequence, 205 residues long: dITP/XTP pyrophosphatase (205 aa).

11–16 (TKNMGK) is a substrate binding site. The Mg(2+) site is built by Glu44 and Asp73. Asp73 functions as the Proton acceptor in the catalytic mechanism. Substrate-binding positions include Ser74, 158-161 (FGYD), Lys181, and 186-187 (HR).

The protein belongs to the HAM1 NTPase family. As to quaternary structure, homodimer. It depends on Mg(2+) as a cofactor.

The enzyme catalyses XTP + H2O = XMP + diphosphate + H(+). It catalyses the reaction dITP + H2O = dIMP + diphosphate + H(+). It carries out the reaction ITP + H2O = IMP + diphosphate + H(+). Pyrophosphatase that catalyzes the hydrolysis of nucleoside triphosphates to their monophosphate derivatives, with a high preference for the non-canonical purine nucleotides XTP (xanthosine triphosphate), dITP (deoxyinosine triphosphate) and ITP. Seems to function as a house-cleaning enzyme that removes non-canonical purine nucleotides from the nucleotide pool, thus preventing their incorporation into DNA/RNA and avoiding chromosomal lesions. The protein is dITP/XTP pyrophosphatase of Bacillus cereus (strain ATCC 14579 / DSM 31 / CCUG 7414 / JCM 2152 / NBRC 15305 / NCIMB 9373 / NCTC 2599 / NRRL B-3711).